Consider the following 125-residue polypeptide: Urotensin-2 (125 aa).

The first 20 residues, 1–20, serve as a signal peptide directing secretion; that stretch reads MYKLASCCLLFIGFLNPLFS. A propeptide spanning residues 21–111 is cleaved from the precursor; it reads LPLLDSGEVS…HLLARIRKPY (91 aa). An intrachain disulfide couples Cys-119 to Cys-124.

This sequence belongs to the urotensin-2 family.

It is found in the secreted. Its function is as follows. Highly potent vasoconstrictor. This chain is Urotensin-2 (UTS2), found in Macaca mulatta (Rhesus macaque).